The chain runs to 348 residues: NADH-quinone oxidoreductase subunit H (348 aa).

A run of 8 helical transmembrane segments spans residues 10–30, 82–102, 115–135, 161–181, 199–219, 251–271, 287–307, and 322–342; these read LPFL…LVLV, GVFL…WAVI, VGLL…IMGG, IGFV…TTIV, FLDW…ISAL, LFFL…TILF, IPGV…FAIV, and LGWK…AAFL.

The protein belongs to the complex I subunit 1 family. As to quaternary structure, NDH-1 is composed of 14 different subunits. Subunits NuoA, H, J, K, L, M, N constitute the membrane sector of the complex.

The protein localises to the cell inner membrane. It catalyses the reaction a quinone + NADH + 5 H(+)(in) = a quinol + NAD(+) + 4 H(+)(out). NDH-1 shuttles electrons from NADH, via FMN and iron-sulfur (Fe-S) centers, to quinones in the respiratory chain. The immediate electron acceptor for the enzyme in this species is believed to be ubiquinone. Couples the redox reaction to proton translocation (for every two electrons transferred, four hydrogen ions are translocated across the cytoplasmic membrane), and thus conserves the redox energy in a proton gradient. This subunit may bind ubiquinone. The chain is NADH-quinone oxidoreductase subunit H from Bartonella tribocorum (strain CIP 105476 / IBS 506).